The chain runs to 114 residues: Large ribosomal subunit protein uL22 (114 aa).

Belongs to the universal ribosomal protein uL22 family. In terms of assembly, part of the 50S ribosomal subunit.

This protein binds specifically to 23S rRNA; its binding is stimulated by other ribosomal proteins, e.g. L4, L17, and L20. It is important during the early stages of 50S assembly. It makes multiple contacts with different domains of the 23S rRNA in the assembled 50S subunit and ribosome. In terms of biological role, the globular domain of the protein is located near the polypeptide exit tunnel on the outside of the subunit, while an extended beta-hairpin is found that lines the wall of the exit tunnel in the center of the 70S ribosome. The polypeptide is Large ribosomal subunit protein uL22 (Desulfitobacterium hafniense (strain Y51)).